The chain runs to 850 residues: Translation initiation factor IF-2 (850 aa).

2 disordered regions span residues 50–72 (LKSS…KTTS) and 92–267 (FVQR…TGPV). The segment covering 96–135 (SPEEIQAEQKREQEERRAAENAAREKADADARQRNEEQAR) has biased composition (basic and acidic residues). The span at 136–172 (RQAAQAPAAAPVAKAEPAPAAAAPAAPAVPDAPVSED) shows a compositional bias: low complexity. 2 stretches are compositionally biased toward basic and acidic residues: residues 173 to 210 (AAAR…RGEA) and 234 to 243 (TTDEESDGFR). Residues 244 to 257 (RGRGGKGKPKKRNQ) are compositionally biased toward basic residues. One can recognise a tr-type G domain in the interval 350–517 (SRAPVVTVMG…AVLLQAEILE (168 aa)). The G1 stretch occupies residues 359–366 (GHVDHGKT). 359 to 366 (GHVDHGKT) is a GTP binding site. The interval 384–388 (GITQH) is G2. Residues 405–408 (DTPG) are G3. GTP contacts are provided by residues 405–409 (DTPGH) and 459–462 (NKID). Positions 459–462 (NKID) are G4. The interval 495–497 (SAK) is G5.

Belongs to the TRAFAC class translation factor GTPase superfamily. Classic translation factor GTPase family. IF-2 subfamily.

It localises to the cytoplasm. Its function is as follows. One of the essential components for the initiation of protein synthesis. Protects formylmethionyl-tRNA from spontaneous hydrolysis and promotes its binding to the 30S ribosomal subunits. Also involved in the hydrolysis of GTP during the formation of the 70S ribosomal complex. This chain is Translation initiation factor IF-2, found in Pseudomonas entomophila (strain L48).